Consider the following 103-residue polypeptide: Large ribosomal subunit protein uL23c (103 aa).

This sequence belongs to the universal ribosomal protein uL23 family. Part of the 50S ribosomal subunit.

The protein resides in the plastid. The protein localises to the chloroplast. In terms of biological role, binds to 23S rRNA. In Gracilaria tenuistipitata var. liui (Red alga), this protein is Large ribosomal subunit protein uL23c (rpl23).